The following is a 215-amino-acid chain: Adenylate kinase (215 aa).

10–15 (GAGKGT) serves as a coordination point for ATP. The segment at 30-59 (STGDMFRAAMKNETEMGKLAKSFIDKGELV) is NMP. Residues Thr31, Arg36, 57–59 (ELV), 86–89 (GYPR), and Gln93 each bind AMP. Positions 127 to 165 (GRYICRNCGATYHKIFNPTKVEGTCDVCGSHDLYQRADD) are LID. Arg128 provides a ligand contact to ATP. Residues Cys131 and Cys134 each coordinate Zn(2+). 137-138 (TY) is a binding site for ATP. Residues Cys151 and Cys154 each contribute to the Zn(2+) site. AMP contacts are provided by Arg162 and Arg173. Residue Gln201 participates in ATP binding.

The protein belongs to the adenylate kinase family. In terms of assembly, monomer.

The protein resides in the cytoplasm. The catalysed reaction is AMP + ATP = 2 ADP. It participates in purine metabolism; AMP biosynthesis via salvage pathway; AMP from ADP: step 1/1. Functionally, catalyzes the reversible transfer of the terminal phosphate group between ATP and AMP. Plays an important role in cellular energy homeostasis and in adenine nucleotide metabolism. The protein is Adenylate kinase of Lactococcus lactis subsp. cremoris (strain SK11).